A 403-amino-acid chain; its full sequence is Acetate kinase (403 aa).

Residue Asn-9 participates in Mg(2+) binding. Lys-16 provides a ligand contact to ATP. A substrate-binding site is contributed by Arg-93. The active-site Proton donor/acceptor is the Asp-150. Residues His-210–Gly-214, Asp-284–Arg-286, and Gly-332–Asn-336 contribute to the ATP site. Glu-388 is a Mg(2+) binding site.

This sequence belongs to the acetokinase family. Homodimer. Mg(2+) is required as a cofactor. Requires Mn(2+) as cofactor.

It is found in the cytoplasm. It carries out the reaction acetate + ATP = acetyl phosphate + ADP. It functions in the pathway metabolic intermediate biosynthesis; acetyl-CoA biosynthesis; acetyl-CoA from acetate: step 1/2. Its function is as follows. Catalyzes the formation of acetyl phosphate from acetate and ATP. Can also catalyze the reverse reaction. The polypeptide is Acetate kinase (Corynebacterium jeikeium (strain K411)).